The following is a 436-amino-acid chain: Coiled-coil domain-containing protein 71 (436 aa).

The disordered stretch occupies residues 95 to 119 (ATSLPARAPQTAKSVPTGQTTLLPV). Residues 105 to 116 (TAKSVPTGQTTL) show a composition bias toward polar residues. S129 carries the post-translational modification Phosphoserine. 2 disordered regions span residues 210–258 (LRKG…MKGR) and 314–405 (ALRG…KVDR). The stretch at 264–334 (KTVRGKAPRT…QAKAKAARTK (71 aa)) forms a coiled coil. A compositionally biased stretch (basic residues) spans 329-340 (KAARTKHKKRPK). Residues 344–359 (QTRTGRTSLKNSSETV) show a composition bias toward polar residues. Basic residues predominate over residues 373 to 386 (PPKKRARCVPRSKA).

This is Coiled-coil domain-containing protein 71 (Ccdc71) from Rattus norvegicus (Rat).